Here is a 430-residue protein sequence, read N- to C-terminus: Glutamate-1-semialdehyde 2,1-aminomutase (430 aa).

Lysine 265 bears the N6-(pyridoxal phosphate)lysine mark.

Belongs to the class-III pyridoxal-phosphate-dependent aminotransferase family. HemL subfamily. In terms of assembly, homodimer. Pyridoxal 5'-phosphate is required as a cofactor.

It localises to the cytoplasm. The enzyme catalyses (S)-4-amino-5-oxopentanoate = 5-aminolevulinate. It functions in the pathway porphyrin-containing compound metabolism; protoporphyrin-IX biosynthesis; 5-aminolevulinate from L-glutamyl-tRNA(Glu): step 2/2. The sequence is that of Glutamate-1-semialdehyde 2,1-aminomutase from Helicobacter pylori (strain Shi470).